The chain runs to 1025 residues: Multidrug resistance protein MdtC (1025 aa).

The next 12 helical transmembrane spans lie at Ile-15–Ala-35, Glu-333–Leu-353, Leu-360–Cys-380, Leu-387–Leu-407, Val-431–Leu-451, Val-469–Leu-489, Leu-528–Pro-548, Ala-851–Tyr-871, Val-875–Leu-895, Ile-897–Val-917, Pro-953–Gly-973, and Ile-984–Val-1004.

It belongs to the resistance-nodulation-cell division (RND) (TC 2.A.6) family. MdtC subfamily. As to quaternary structure, part of a tripartite efflux system composed of MdtA, MdtB and MdtC. MdtC forms a heteromultimer with MdtB.

Its subcellular location is the cell inner membrane. This is Multidrug resistance protein MdtC from Klebsiella pneumoniae subsp. pneumoniae (strain ATCC 700721 / MGH 78578).